Here is a 120-residue protein sequence, read N- to C-terminus: NAD(P)H-quinone oxidoreductase subunit 3, chloroplastic (120 aa).

Transmembrane regions (helical) follow at residues 9 to 29, 64 to 84, and 88 to 108; these read IFWAFLIISSVIPILAFLISG, MFALVFVVFDVETVFLYPWAM, and VLGVSVFVEALIFVLILIVGL.

Belongs to the complex I subunit 3 family. NDH is composed of at least 16 different subunits, 5 of which are encoded in the nucleus.

It localises to the plastid. The protein resides in the chloroplast thylakoid membrane. It catalyses the reaction a plastoquinone + NADH + (n+1) H(+)(in) = a plastoquinol + NAD(+) + n H(+)(out). The catalysed reaction is a plastoquinone + NADPH + (n+1) H(+)(in) = a plastoquinol + NADP(+) + n H(+)(out). In terms of biological role, NDH shuttles electrons from NAD(P)H:plastoquinone, via FMN and iron-sulfur (Fe-S) centers, to quinones in the photosynthetic chain and possibly in a chloroplast respiratory chain. The immediate electron acceptor for the enzyme in this species is believed to be plastoquinone. Couples the redox reaction to proton translocation, and thus conserves the redox energy in a proton gradient. The protein is NAD(P)H-quinone oxidoreductase subunit 3, chloroplastic of Ranunculus macranthus (Large buttercup).